Here is a 192-residue protein sequence, read N- to C-terminus: Adenylate kinase (192 aa).

10–15 (GSGKGT) lines the ATP pocket. An NMP region spans residues 30 to 59 (STGDMLREVISRETEVGRKAKAIINAGALV). Residues threonine 31, arginine 36, 57 to 59 (ALV), 85 to 88 (GYPR), and glutamine 92 each bind AMP. Residues 126-142 (KRVQETIAVGGQVRSDD) are LID. An ATP-binding site is contributed by arginine 127. AMP is bound by residues arginine 139 and arginine 150. Methionine 178 contributes to the ATP binding site.

The protein belongs to the adenylate kinase family. Monomer.

It localises to the cytoplasm. The enzyme catalyses AMP + ATP = 2 ADP. It functions in the pathway purine metabolism; AMP biosynthesis via salvage pathway; AMP from ADP: step 1/1. In terms of biological role, catalyzes the reversible transfer of the terminal phosphate group between ATP and AMP. Plays an important role in cellular energy homeostasis and in adenine nucleotide metabolism. The protein is Adenylate kinase of Bartonella quintana (strain Toulouse) (Rochalimaea quintana).